We begin with the raw amino-acid sequence, 207 residues long: Hepatic lectin (207 aa).

M1 carries the N-acetylmethionine modification. Topologically, residues 1–23 (MDEERLSDNVRLYKGGSIRQGLR) are cytoplasmic. The helical; Signal-anchor for type II membrane protein transmembrane segment at 24–48 (SFAAVYVLLALSFLLLTLLSSVSLA) threads the bilayer. Topologically, residues 49–207 (RIAALSSKLS…YYVCEKPLPK (159 aa)) are extracellular. N67 is a glycosylation site (N-linked (GlcNAc...) asparagine). Positions 77–203 (PCGAQSRQWE…TYECYYVCEK (127 aa)) constitute a C-type lectin domain. Intrachain disulfides connect C78–C92, C109–C201, and C179–C193.

In terms of processing, some or all of the cysteines are involved in disulfide bonds.

The protein resides in the membrane. Its function is as follows. Hepatic lectin is a membrane receptor protein that recognizes and binds exposed N-acetylglucosamine moieties of plasma glycoproteins, thus mediating their clearance (from the circulation) and endocytosis. This is Hepatic lectin from Gallus gallus (Chicken).